Here is a 301-residue protein sequence, read N- to C-terminus: LHMIHLHWYQYPPMNPMMYPLLLIFMLFTGILCLAGNFVTIWVFMNTKSLRTPANLLVVNLAMSDFLMMFTMFPPMMVTCYYHTWTLGPTFCQVYGFLGNLCGCASIWTMVFITFDRYNVIVKGVAGEPLSTKKASLWILIVWVLSLAWCMAPFFGWNRYVPEGNLTGCGTDYLSEDILSRSYLYIYSTWVYFLPLTITIYCYVFIIKAVAAHEKGMRDQAKKMGIKSLRNEEAQKTSAECRLAKIAMTTVALWFIAWTPYLLINWVGMFARSYLSPVYTIWGYVFAKANAVYNPIVYAIS.

Residues 1 to 18 lie on the Extracellular side of the membrane; it reads LHMIHLHWYQYPPMNPMM. A helical membrane pass occupies residues 19–43; it reads YPLLLIFMLFTGILCLAGNFVTIWV. At 44 to 55 the chain is on the cytoplasmic side; sequence FMNTKSLRTPAN. Residues 56-78 form a helical membrane-spanning segment; sequence LLVVNLAMSDFLMMFTMFPPMMV. The Extracellular portion of the chain corresponds to 79-92; the sequence is TCYYHTWTLGPTFC. Cysteine 92 and cysteine 169 are disulfide-bonded. The helical transmembrane segment at 93 to 115 threads the bilayer; that stretch reads QVYGFLGNLCGCASIWTMVFITF. The short motif at 116–118 is the 'Ionic lock' involved in activated form stabilization element; the sequence is DRY. The Cytoplasmic portion of the chain corresponds to 116-134; sequence DRYNVIVKGVAGEPLSTKK. A helical transmembrane segment spans residues 135 to 155; the sequence is ASLWILIVWVLSLAWCMAPFF. At 156–182 the chain is on the extracellular side; the sequence is GWNRYVPEGNLTGCGTDYLSEDILSRS. N-linked (GlcNAc...) asparagine glycosylation occurs at asparagine 165. A helical membrane pass occupies residues 183–204; the sequence is YLYIYSTWVYFLPLTITIYCYV. Topologically, residues 205–245 are cytoplasmic; it reads FIIKAVAAHEKGMRDQAKKMGIKSLRNEEAQKTSAECRLAK. Residues 246–267 traverse the membrane as a helical segment; sequence IAMTTVALWFIAWTPYLLINWV. The Extracellular segment spans residues 268–278; the sequence is GMFARSYLSPV. The chain crosses the membrane as a helical span at residues 279–300; it reads YTIWGYVFAKANAVYNPIVYAI. Residue lysine 288 is modified to N6-(retinylidene)lysine.

Belongs to the G-protein coupled receptor 1 family. Opsin subfamily. Homodimer. Interacts with GNAQ. In terms of processing, contains one covalently linked retinal chromophore.

Its subcellular location is the cell projection. The protein localises to the rhabdomere membrane. Photoreceptor required for image-forming vision at low light intensity. Can use both retinal and 3-dehydroretinal as visual pigment. Light-induced isomerization of 11-cis to all-trans retinal triggers a conformational change that activates signaling via G-proteins. Signaling via GNAQ probably mediates the activation of phospholipase C. In Procambarus milleri (Miami cave crayfish), this protein is Rhodopsin (RHO).